The following is a 329-amino-acid chain: 4-hydroxythreonine-4-phosphate dehydrogenase (329 aa).

The substrate site is built by histidine 136 and threonine 137. A divalent metal cation-binding residues include histidine 166, histidine 211, and histidine 266. Substrate contacts are provided by lysine 274, asparagine 283, and arginine 292.

The protein belongs to the PdxA family. As to quaternary structure, homodimer. It depends on Zn(2+) as a cofactor. The cofactor is Mg(2+). Co(2+) is required as a cofactor.

The protein resides in the cytoplasm. The catalysed reaction is 4-(phosphooxy)-L-threonine + NAD(+) = 3-amino-2-oxopropyl phosphate + CO2 + NADH. The protein operates within cofactor biosynthesis; pyridoxine 5'-phosphate biosynthesis; pyridoxine 5'-phosphate from D-erythrose 4-phosphate: step 4/5. In terms of biological role, catalyzes the NAD(P)-dependent oxidation of 4-(phosphooxy)-L-threonine (HTP) into 2-amino-3-oxo-4-(phosphooxy)butyric acid which spontaneously decarboxylates to form 3-amino-2-oxopropyl phosphate (AHAP). The sequence is that of 4-hydroxythreonine-4-phosphate dehydrogenase from Shigella sonnei (strain Ss046).